The sequence spans 210 residues: Dephospho-CoA kinase (210 aa).

One can recognise a DPCK domain in the interval 15–210 (VLGLTGGIGC…HKGYLKLALK (196 aa)). ATP is bound at residue 23 to 28 (GCGKTA).

The protein belongs to the CoaE family.

The protein resides in the cytoplasm. It catalyses the reaction 3'-dephospho-CoA + ATP = ADP + CoA + H(+). The protein operates within cofactor biosynthesis; coenzyme A biosynthesis; CoA from (R)-pantothenate: step 5/5. In terms of biological role, catalyzes the phosphorylation of the 3'-hydroxyl group of dephosphocoenzyme A to form coenzyme A. The protein is Dephospho-CoA kinase of Pseudoalteromonas translucida (strain TAC 125).